The following is a 598-amino-acid chain: Mitogen-activated protein kinase 19 (598 aa).

Positions 25–316 constitute a Protein kinase domain; sequence YRILEVIGKG…AAEALADPYF (292 aa). ATP is bound by residues 31-39 and K54; that span reads IGKGSYGVV. The active-site Proton acceptor is D151. T187 is modified (phosphothreonine). A TXY motif is present at residues 187–189; sequence TDY. Phosphotyrosine is present on Y189. The residue at position 192 (T192) is a Phosphothreonine. A disordered region spans residues 396-486; sequence GKSGPVIPPD…VTYENDRNLK (91 aa). Over residues 414–425 the composition is skewed to low complexity; sequence SAVHSSAVNSNA.

Belongs to the protein kinase superfamily. CMGC Ser/Thr protein kinase family. MAP kinase subfamily. Post-translationally, dually phosphorylated on Thr-187 and Tyr-189, which activates the enzyme.

It carries out the reaction L-seryl-[protein] + ATP = O-phospho-L-seryl-[protein] + ADP + H(+). It catalyses the reaction L-threonyl-[protein] + ATP = O-phospho-L-threonyl-[protein] + ADP + H(+). With respect to regulation, activated by threonine and tyrosine phosphorylation. The sequence is that of Mitogen-activated protein kinase 19 (MPK19) from Arabidopsis thaliana (Mouse-ear cress).